Reading from the N-terminus, the 277-residue chain is Formamidopyrimidine-DNA glycosylase (277 aa).

Residue P2 is the Schiff-base intermediate with DNA of the active site. The active-site Proton donor is the E3. K58 (proton donor; for beta-elimination activity) is an active-site residue. H94, R113, and R156 together coordinate DNA. The segment at 241 to 277 adopts an FPG-type zinc-finger fold; the sequence is LVYGREGVPCPNCGAEHPIQRITQAGRSTFFCPTCQK. Residue R267 is the Proton donor; for delta-elimination activity of the active site.

Belongs to the FPG family. In terms of assembly, monomer. Zn(2+) serves as cofactor.

The enzyme catalyses Hydrolysis of DNA containing ring-opened 7-methylguanine residues, releasing 2,6-diamino-4-hydroxy-5-(N-methyl)formamidopyrimidine.. It carries out the reaction 2'-deoxyribonucleotide-(2'-deoxyribose 5'-phosphate)-2'-deoxyribonucleotide-DNA = a 3'-end 2'-deoxyribonucleotide-(2,3-dehydro-2,3-deoxyribose 5'-phosphate)-DNA + a 5'-end 5'-phospho-2'-deoxyribonucleoside-DNA + H(+). Involved in base excision repair of DNA damaged by oxidation or by mutagenic agents. Acts as a DNA glycosylase that recognizes and removes damaged bases. Has a preference for oxidized purines, such as 7,8-dihydro-8-oxoguanine (8-oxoG). Has AP (apurinic/apyrimidinic) lyase activity and introduces nicks in the DNA strand. Cleaves the DNA backbone by beta-delta elimination to generate a single-strand break at the site of the removed base with both 3'- and 5'-phosphates. This is Formamidopyrimidine-DNA glycosylase from Gluconobacter oxydans (strain 621H) (Gluconobacter suboxydans).